Here is a 313-residue protein sequence, read N- to C-terminus: Homoserine O-acetyltransferase (313 aa).

C142 serves as the catalytic Acyl-thioester intermediate. 2 residues coordinate substrate: K163 and S191. H234 serves as the catalytic Proton acceptor. E236 is an active-site residue. Position 248 (R248) interacts with substrate.

This sequence belongs to the MetA family.

Its subcellular location is the cytoplasm. It carries out the reaction L-homoserine + acetyl-CoA = O-acetyl-L-homoserine + CoA. It participates in amino-acid biosynthesis; L-methionine biosynthesis via de novo pathway; O-acetyl-L-homoserine from L-homoserine: step 1/1. Transfers an acetyl group from acetyl-CoA to L-homoserine, forming acetyl-L-homoserine. This is Homoserine O-acetyltransferase from Streptococcus gordonii (strain Challis / ATCC 35105 / BCRC 15272 / CH1 / DL1 / V288).